A 246-amino-acid chain; its full sequence is MQHQDVAIIIPSRLSSTRLKQKPLQLIGSITLIERVFKQINQANLEHTYVATDSEEISNIIKKVRGKVIFTDSAIPTGTDRTYEAFKLIPNNQNINYIVNVQGDMPFIEPSSVLKIIEYLKNSEYDIVTPVVKVDRESVEASSNVTVAVDSAGKALYFSRSLIPNGAEEFLYHVGMYGFRKNALEKFVSLKPTFLEKTERLEQLRVLENGMTIGTCLVENVPISVDTEEDLKKAVKFYENISKLGL.

This sequence belongs to the KdsB family.

The protein resides in the cytoplasm. The catalysed reaction is 3-deoxy-alpha-D-manno-oct-2-ulosonate + CTP = CMP-3-deoxy-beta-D-manno-octulosonate + diphosphate. The protein operates within nucleotide-sugar biosynthesis; CMP-3-deoxy-D-manno-octulosonate biosynthesis; CMP-3-deoxy-D-manno-octulosonate from 3-deoxy-D-manno-octulosonate and CTP: step 1/1. It participates in bacterial outer membrane biogenesis; lipopolysaccharide biosynthesis. Its function is as follows. Activates KDO (a required 8-carbon sugar) for incorporation into bacterial lipopolysaccharide in Gram-negative bacteria. The chain is 3-deoxy-manno-octulosonate cytidylyltransferase from Rickettsia akari (strain Hartford).